Consider the following 313-residue polypeptide: Glucosyl-dolichyl phosphate glucuronosyltransferase (313 aa).

Residues 284–304 (LIAIFVFTAAVGFGYVYGLLT) form a helical membrane-spanning segment.

The protein belongs to the glycosyltransferase 2 family.

It localises to the cell membrane. It carries out the reaction an archaeal dolichyl alpha-D-glucosyl phosphate + UDP-alpha-D-glucuronate = an archaeal dolichyl beta-D-glucuronosyl-(1-&gt;4)-alpha-D-glucosyl phosphate + UDP + H(+). The protein operates within cell surface structure biogenesis; S-layer biogenesis. Its function is as follows. Involved in the protein N-glycosylation pathway responsible for the assembly and attachment of an N-linked pentasaccharide that decorates the S-layer glycoprotein and flagellins. Catalyzes the transfer of a glucuronate residue (GlcA) to a glucose residue already bound to a dolichol phosphate (DolP), a compound that serves as a glycan lipid carrier in Archaea. In vitro, is able to add GlcA to DolP-Glc in which the omega-position isoprene is not saturated. However, the likely physiological lipid substrate is alpha,omega-saturated. The polypeptide is Glucosyl-dolichyl phosphate glucuronosyltransferase (Haloferax volcanii (strain ATCC 29605 / DSM 3757 / JCM 8879 / NBRC 14742 / NCIMB 2012 / VKM B-1768 / DS2) (Halobacterium volcanii)).